Reading from the N-terminus, the 359-residue chain is Lipopolysaccharide 1,6-galactosyltransferase (359 aa).

Gln244 and Glu276 together coordinate UDP.

This sequence belongs to the glycosyltransferase group 1 family. Glycosyltransferase 4 subfamily.

The catalysed reaction is alpha-D-Glc-(1-&gt;3)-[L-alpha-D-Hep-(1-&gt;7)]-4-O-PO3(2-)-L-alpha-D-Hep-(1-&gt;3)-4-O-PO3(2-)-L-alpha-D-Hep-(1-&gt;5)-[alpha-Kdo-(2-&gt;4)]-alpha-Kdo-(2-&gt;6)-lipid A + UDP-alpha-D-galactose = alpha-D-Gal-(1-&gt;6)-alpha-D-Glc-(1-&gt;3)-[L-alpha-D-Hep-(1-&gt;7)]-4-O-PO3(2-)-L-alpha-D-Hep-(1-&gt;3)-4-O-PO3(2-)-L-alpha-D-Hep-(1-&gt;5)-[alpha-Kdo-(2-&gt;4)]-alpha-Kdo-(2-&gt;6)-lipid A + UDP + H(+). It functions in the pathway bacterial outer membrane biogenesis; LPS core biosynthesis. Galactosyltransferase involved in the biosynthesis of the core oligosaccharide region of lipopolysaccharide (LPS). Catalyzes the addition of galactose from UDP-galactose to the first glucose residue of the LPS outer core. This chain is Lipopolysaccharide 1,6-galactosyltransferase, found in Salmonella typhimurium (strain LT2 / SGSC1412 / ATCC 700720).